A 266-amino-acid polypeptide reads, in one-letter code: Large ribosomal subunit protein eL8 (266 aa).

Basic and acidic residues predominate over residues 104–130; sequence PETKQEKKQRLLARAEQKAAGKGDTPT. A disordered region spans residues 104 to 135; the sequence is PETKQEKKQRLLARAEQKAAGKGDTPTKRPPV.

This sequence belongs to the eukaryotic ribosomal protein eL8 family. In terms of assembly, component of the large ribosomal subunit.

The protein resides in the cytoplasm. In terms of biological role, component of the large ribosomal subunit. The ribosome is a large ribonucleoprotein complex responsible for the synthesis of proteins in the cell. This chain is Large ribosomal subunit protein eL8 (RPL7A), found in Gallus gallus (Chicken).